The sequence spans 445 residues: Phosphoglucosamine mutase (445 aa).

The Phosphoserine intermediate role is filled by Ser-102. The Mg(2+) site is built by Ser-102, Asp-241, Asp-243, and Asp-245. Position 102 is a phosphoserine (Ser-102).

It belongs to the phosphohexose mutase family. The cofactor is Mg(2+). Post-translationally, activated by phosphorylation.

The catalysed reaction is alpha-D-glucosamine 1-phosphate = D-glucosamine 6-phosphate. Catalyzes the conversion of glucosamine-6-phosphate to glucosamine-1-phosphate. The protein is Phosphoglucosamine mutase of Aliivibrio fischeri (strain MJ11) (Vibrio fischeri).